We begin with the raw amino-acid sequence, 314 residues long: tRNA dimethylallyltransferase (314 aa).

40-47 (GPTASGKS) contributes to the ATP binding site. 42 to 47 (TASGKS) provides a ligand contact to substrate.

This sequence belongs to the IPP transferase family. Monomer. Mg(2+) is required as a cofactor.

It carries out the reaction adenosine(37) in tRNA + dimethylallyl diphosphate = N(6)-dimethylallyladenosine(37) in tRNA + diphosphate. Its function is as follows. Catalyzes the transfer of a dimethylallyl group onto the adenine at position 37 in tRNAs that read codons beginning with uridine, leading to the formation of N6-(dimethylallyl)adenosine (i(6)A). The sequence is that of tRNA dimethylallyltransferase from Cereibacter sphaeroides (strain KD131 / KCTC 12085) (Rhodobacter sphaeroides).